A 901-amino-acid chain; its full sequence is HTH-type transcriptional regulator MalT (901 aa).

Residue 39–46 participates in ATP binding; it reads SPAGYGKT. The region spanning 829 to 894 is the HTH luxR-type domain; that stretch reads ELIRTSPLTQ…DAVQHAQQLL (66 aa). The segment at residues 853 to 872 is a DNA-binding region (H-T-H motif); sequence NEQIAGELAVAATTIKTHIR.

It belongs to the MalT family. As to quaternary structure, monomer in solution. Oligomerizes to an active state in the presence of the positive effectors ATP and maltotriose.

Activated by ATP and maltotriose, which are both required for DNA binding. Its function is as follows. Positively regulates the transcription of the maltose regulon whose gene products are responsible for uptake and catabolism of malto-oligosaccharides. Specifically binds to the promoter region of its target genes, recognizing a short DNA motif called the MalT box. In Salmonella heidelberg (strain SL476), this protein is HTH-type transcriptional regulator MalT.